A 173-amino-acid chain; its full sequence is Ribosome maturation factor RimM (173 aa).

The region spanning 94-173 is the PRC barrel domain; sequence EGEFYWRDLI…TIEVDWDPGF (80 aa).

It belongs to the RimM family. Binds ribosomal protein uS19.

The protein localises to the cytoplasm. In terms of biological role, an accessory protein needed during the final step in the assembly of 30S ribosomal subunit, possibly for assembly of the head region. Essential for efficient processing of 16S rRNA. May be needed both before and after RbfA during the maturation of 16S rRNA. It has affinity for free ribosomal 30S subunits but not for 70S ribosomes. This chain is Ribosome maturation factor RimM, found in Aeromonas salmonicida (strain A449).